We begin with the raw amino-acid sequence, 458 residues long: NADH-ubiquinone oxidoreductase chain 4 (458 aa).

Helical transmembrane passes span 21–43 (ASLW…QWLN), 58–78 (IDQI…LMLL), 93–112 (RTFI…AFSA), 116–138 (TLFY…RWGN), 145–165 (AGIY…VTIL), 196–216 (GLAL…HLWL), 224–244 (PIAG…YGIM), 257–277 (LSYP…SICL), 285–305 (LIAY…MIQT), 309–329 (FSGA…LFCL), 341–361 (ILLL…WWLL), and 379–399 (LTIM…TGLA).

This sequence belongs to the complex I subunit 4 family.

The protein localises to the mitochondrion membrane. It catalyses the reaction a ubiquinone + NADH + 5 H(+)(in) = a ubiquinol + NAD(+) + 4 H(+)(out). Its function is as follows. Core subunit of the mitochondrial membrane respiratory chain NADH dehydrogenase (Complex I) that is believed to belong to the minimal assembly required for catalysis. Complex I functions in the transfer of electrons from NADH to the respiratory chain. The immediate electron acceptor for the enzyme is believed to be ubiquinone. The chain is NADH-ubiquinone oxidoreductase chain 4 (MT-ND4) from Struthio camelus (Common ostrich).